The chain runs to 424 residues: Sulfate adenylyltransferase (424 aa).

The protein belongs to the sulfate adenylyltransferase family.

The enzyme catalyses sulfate + ATP + H(+) = adenosine 5'-phosphosulfate + diphosphate. It functions in the pathway sulfur metabolism; hydrogen sulfide biosynthesis; sulfite from sulfate: step 1/3. The polypeptide is Sulfate adenylyltransferase (Desulfatibacillum aliphaticivorans).